The following is a 158-amino-acid chain: MAIDGILKQGFITTSADKFLNWAKTGSMWPMTFGLACCAVEMMHAGAARYDLDQFGIIFRPSPRQSDLMIVAGTLCNKMGPALRKVYDQMPEPRWVVSMGSCANGGGYYHYSYSVVRGCDRIVPVDVYVPGCPPTAEALVYGLLQMQNKIRLTNTIAR.

[4Fe-4S] cluster-binding residues include C37, C38, C102, and C132.

It belongs to the complex I 20 kDa subunit family. NDH-1 is composed of 14 different subunits. Subunits NuoB, C, D, E, F, and G constitute the peripheral sector of the complex. It depends on [4Fe-4S] cluster as a cofactor.

The protein resides in the cell inner membrane. The catalysed reaction is a quinone + NADH + 5 H(+)(in) = a quinol + NAD(+) + 4 H(+)(out). Its function is as follows. NDH-1 shuttles electrons from NADH, via FMN and iron-sulfur (Fe-S) centers, to quinones in the respiratory chain. Couples the redox reaction to proton translocation (for every two electrons transferred, four hydrogen ions are translocated across the cytoplasmic membrane), and thus conserves the redox energy in a proton gradient. In Bordetella parapertussis (strain 12822 / ATCC BAA-587 / NCTC 13253), this protein is NADH-quinone oxidoreductase subunit B.